The chain runs to 156 residues: MNINVTLIGQMGTFLVFWWFVNKVIWPMFANIATERQRKIADGLNMADKAKFAVQEAEHQSQEILSKAKMQAAEIVSRANKEASEMIAQAKEQAQRSSEAEVLQAHVQIEQEKRQVRDELRAQLSHLVIAGAEKVLGREVNDRDHERLLHELTEKF.

The helical transmembrane segment at 7 to 29 (LIGQMGTFLVFWWFVNKVIWPMF) threads the bilayer.

Belongs to the ATPase B chain family. As to quaternary structure, F-type ATPases have 2 components, F(1) - the catalytic core - and F(0) - the membrane proton channel. F(1) has five subunits: alpha(3), beta(3), gamma(1), delta(1), epsilon(1). F(0) has three main subunits: a(1), b(2) and c(10-14). The alpha and beta chains form an alternating ring which encloses part of the gamma chain. F(1) is attached to F(0) by a central stalk formed by the gamma and epsilon chains, while a peripheral stalk is formed by the delta and b chains.

It localises to the cell inner membrane. Functionally, f(1)F(0) ATP synthase produces ATP from ADP in the presence of a proton or sodium gradient. F-type ATPases consist of two structural domains, F(1) containing the extramembraneous catalytic core and F(0) containing the membrane proton channel, linked together by a central stalk and a peripheral stalk. During catalysis, ATP synthesis in the catalytic domain of F(1) is coupled via a rotary mechanism of the central stalk subunits to proton translocation. Component of the F(0) channel, it forms part of the peripheral stalk, linking F(1) to F(0). This is ATP synthase subunit b from Dichelobacter nodosus (strain VCS1703A).